The chain runs to 70 residues: MKVYCLLLVLLVGLVSQAHGQLDKKCQMVCTMDYRPVCGSDGRTYPNKCTLTSTACMSQRSITVFHDGEC.

The first 20 residues, 1–20 (MKVYCLLLVLLVGLVSQAHG), serve as a signal peptide directing secretion. A Kazal-like domain is found at 21-70 (QLDKKCQMVCTMDYRPVCGSDGRTYPNKCTLTSTACMSQRSITVFHDGEC). 3 disulfides stabilise this stretch: Cys-26–Cys-56, Cys-30–Cys-49, and Cys-38–Cys-70.

It belongs to the conopeptide P-like superfamily. In terms of tissue distribution, expressed by the venom duct.

It is found in the secreted. Acts as a neurotoxin by inhibiting an ion channel. May also act as a serine protease inhibitor, since it possess the kazal serine protease inhibitor signature. The polypeptide is Turripeptide Gsg9.2 (Gemmula sogodensis (Gem-turris)).